The following is a 981-amino-acid chain: Mineralocorticoid receptor (981 aa).

The tract at residues 1–603 is modulating; the sequence is METKGYHSLP…STGSSRPSKI (603 aa). The span at 234-258 shows a compositional bias: polar residues; it reads SLTCSPSVENRGSRSHSPTHASNVG. 2 disordered regions span residues 234 to 331 and 355 to 376; these read SLTC…ASTV and AIQD…VPFP. Phosphoserine is present on residues S250, S259, S283, S287, and S299. Low complexity-rich tracts occupy residues 259-300 and 309-327; these read SPLS…VSSP and SVSS…SSPT. Zn(2+) is bound by residues C604, C607, C621, C624, C640, C646, C656, and C659. NR C4-type zinc fingers lie at residues 604-624 and 640-664; these read CLVC…CGSC and CAGR…LQKC. A DNA-binding region (nuclear receptor) is located at residues 604 to 669; the sequence is CLVCGDEASG…RLQKCLQAGM (66 aa). The segment at 670-722 is hinge; it reads NLGARKSKKLGKLKGLHEEQPQQPPPPPPQSPEEGTTYIAPTKEPSVNSALVP. Residues 684–710 are disordered; sequence GLHEEQPQQPPPPPPQSPEEGTTYIAP. Over residues 691-700 the composition is skewed to pro residues; the sequence is QQPPPPPPQS. An NR LBD domain is found at 723-961; the sequence is QLTSITHALT…EFPAMLVEII (239 aa). The 21-hydroxyprogesterone site is built by N767 and Q773. The aldosterone site is built by N767 and Q773. Progesterone-binding residues include N767 and Q773. The tract at residues 779–782 is important for coactivator binding; it reads KWAK. 21-hydroxyprogesterone-binding residues include R814 and T942. R814 and T942 together coordinate aldosterone. Residues R814 and T942 each coordinate progesterone.

It belongs to the nuclear hormone receptor family. NR3 subfamily. As to quaternary structure, heteromultimeric cytoplasmic complex with HSP90, HSP70, and FKBP4, in the absence of ligand. After ligand binding, it translocates to the nucleus and binds to DNA as a homodimer and as a heterodimer with NR3C1. Binds the coactivator NCOA2. May interact with HSD11B2 in the absence of ligand. Binds the coactivators NCOA1, TIF1 and NRIP1. Phosphorylated. As to expression, detected in liver, brain, heart, kidney, colon, aorta, hippocampus, hypothalamus and adrenal fasciculata.

Its subcellular location is the cytoplasm. It is found in the nucleus. The protein resides in the endoplasmic reticulum membrane. Receptor for both mineralocorticoids (MC) such as aldosterone and glucocorticoids (GC) such as corticosterone or cortisol. Binds to mineralocorticoid response elements (MRE) and transactivates target genes. The effect of MC is to increase ion and water transport and thus raise extracellular fluid volume and blood pressure and lower potassium levels. This Rattus norvegicus (Rat) protein is Mineralocorticoid receptor (Nr3c2).